Reading from the N-terminus, the 78-residue chain is MTRHLIFAAMLLVCLFVCWNAVGARDARSAFSLEETAQDEHVMEERIFINPAGNREKNACLENCRSSPNCENYEFCSK.

An N-terminal signal peptide occupies residues 1–24; that stretch reads MTRHLIFAAMLLVCLFVCWNAVGA. The propeptide occupies 25–28; it reads RDAR.

This sequence belongs to the scoloptoxin-04 family. Post-translationally, contains 2 disulfide bonds. Expressed by the venom gland.

It localises to the secreted. This chain is U-scoloptoxin(04)-Er1d, found in Ethmostigmus rubripes (Giant centipede).